The following is a 209-amino-acid chain: Ribosomal RNA large subunit methyltransferase E (209 aa).

Residues Gly-63, Trp-65, Asp-83, Asp-99, and Asp-124 each contribute to the S-adenosyl-L-methionine site. Lys-164 acts as the Proton acceptor in catalysis.

The protein belongs to the class I-like SAM-binding methyltransferase superfamily. RNA methyltransferase RlmE family.

It localises to the cytoplasm. The enzyme catalyses uridine(2552) in 23S rRNA + S-adenosyl-L-methionine = 2'-O-methyluridine(2552) in 23S rRNA + S-adenosyl-L-homocysteine + H(+). In terms of biological role, specifically methylates the uridine in position 2552 of 23S rRNA at the 2'-O position of the ribose in the fully assembled 50S ribosomal subunit. The sequence is that of Ribosomal RNA large subunit methyltransferase E from Shewanella frigidimarina (strain NCIMB 400).